A 296-amino-acid chain; its full sequence is Nucleotide-binding protein Rmet_0297 (296 aa).

8-15 (GISGSGKS) is a binding site for ATP. 57-60 (DIRS) provides a ligand contact to GTP.

The protein belongs to the RapZ-like family.

Functionally, displays ATPase and GTPase activities. This chain is Nucleotide-binding protein Rmet_0297, found in Cupriavidus metallidurans (strain ATCC 43123 / DSM 2839 / NBRC 102507 / CH34) (Ralstonia metallidurans).